Consider the following 189-residue polypeptide: dCTP deaminase (189 aa).

DCTP is bound by residues 112 to 117 (KSTYAR), 136 to 138 (TLE), Gln-157, Tyr-171, and Gln-181. Glu-138 (proton donor/acceptor) is an active-site residue.

It belongs to the dCTP deaminase family. As to quaternary structure, homotrimer.

The enzyme catalyses dCTP + H2O + H(+) = dUTP + NH4(+). The protein operates within pyrimidine metabolism; dUMP biosynthesis; dUMP from dCTP (dUTP route): step 1/2. Functionally, catalyzes the deamination of dCTP to dUTP. This is dCTP deaminase from Paraburkholderia phymatum (strain DSM 17167 / CIP 108236 / LMG 21445 / STM815) (Burkholderia phymatum).